Reading from the N-terminus, the 318-residue chain is Pantothenate kinase (318 aa).

96-103 (GSVAVGKS) serves as a coordination point for ATP.

It belongs to the prokaryotic pantothenate kinase family.

It localises to the cytoplasm. It carries out the reaction (R)-pantothenate + ATP = (R)-4'-phosphopantothenate + ADP + H(+). It participates in cofactor biosynthesis; coenzyme A biosynthesis; CoA from (R)-pantothenate: step 1/5. In Rhodopseudomonas palustris (strain HaA2), this protein is Pantothenate kinase.